The primary structure comprises 271 residues: S-adenosylmethionine decarboxylase proenzyme (271 aa).

Ser-121 serves as the catalytic Schiff-base intermediate with substrate; via pyruvic acid. The residue at position 121 (Ser-121) is a Pyruvic acid (Ser); by autocatalysis. Catalysis depends on His-126, which acts as the Proton acceptor; for processing activity. Residue Cys-149 is the Proton donor; for catalytic activity of the active site.

This sequence belongs to the prokaryotic AdoMetDC family. Type 2 subfamily. Heterooctamer of four alpha and four beta chains arranged as a tetramer of alpha/beta heterodimers. The cofactor is pyruvate. Post-translationally, is synthesized initially as an inactive proenzyme. Formation of the active enzyme involves a self-maturation process in which the active site pyruvoyl group is generated from an internal serine residue via an autocatalytic post-translational modification. Two non-identical subunits are generated from the proenzyme in this reaction, and the pyruvate is formed at the N-terminus of the alpha chain, which is derived from the carboxyl end of the proenzyme. The post-translation cleavage follows an unusual pathway, termed non-hydrolytic serinolysis, in which the side chain hydroxyl group of the serine supplies its oxygen atom to form the C-terminus of the beta chain, while the remainder of the serine residue undergoes an oxidative deamination to produce ammonia and the pyruvoyl group blocking the N-terminus of the alpha chain.

The enzyme catalyses S-adenosyl-L-methionine + H(+) = S-adenosyl 3-(methylsulfanyl)propylamine + CO2. Its pathway is amine and polyamine biosynthesis; S-adenosylmethioninamine biosynthesis; S-adenosylmethioninamine from S-adenosyl-L-methionine: step 1/1. Catalyzes the decarboxylation of S-adenosylmethionine to S-adenosylmethioninamine (dcAdoMet), the propylamine donor required for the synthesis of the polyamines spermine and spermidine from the diamine putrescine. This Clostridium perfringens (strain SM101 / Type A) protein is S-adenosylmethionine decarboxylase proenzyme.